Reading from the N-terminus, the 82-residue chain is Large ribosomal subunit protein uL24c (82 aa).

Belongs to the universal ribosomal protein uL24 family. As to quaternary structure, part of the 50S ribosomal subunit.

The protein resides in the plastid. It is found in the chloroplast. Functionally, one of two assembly initiator proteins, it binds directly to the 5'-end of the 23S rRNA, where it nucleates assembly of the 50S subunit. The protein is Large ribosomal subunit protein uL24c (rpl24) of Phaeodactylum tricornutum (strain CCAP 1055/1).